We begin with the raw amino-acid sequence, 1716 residues long: Histone-lysine N-methyltransferase SETD1A (1716 aa).

Positions 60-89 (LQDPRCHVRSKARDFSLPVPKFKLDEFYIG) are interaction with WDR82. Residues 84 to 172 (DEFYIGQIPL…NIIHAQLDIK (89 aa)) form the RRM domain. Disordered regions lie at residues 194 to 367 (PTGG…SSYP), 380 to 499 (TSYP…AQHS), 516 to 670 (FSFL…PPPH), 849 to 869 (AKPF…EKMK), 911 to 1206 (KRKE…SRKV), 1230 to 1259 (EEVA…GTEV), and 1275 to 1297 (GLAT…AERP). A compositionally biased stretch (low complexity) spans 222 to 231 (SDTAAYPAGT). Positions 243 to 277 (CSQDTNFSSSRQDTPSSFGQFTPQSSQGTPYTSRG) are enriched in polar residues. Low complexity-rich tracts occupy residues 278-295 (STPY…TSTS) and 315-357 (STSS…SSAS). A compositionally biased stretch (pro residues) spans 430–440 (SEAPPPEPPEP). Over residues 441-461 (GGGGGGSGGGGGGGGGGGGGA) the composition is skewed to gly residues. Position 477 is a phosphoserine (serine 477). Residues 477–487 (SPARSGSPAPE) show a composition bias toward low complexity. Positions 488 to 499 (TTNESVPFAQHS) are enriched in polar residues. Serine 521 and serine 578 each carry phosphoserine. Positions 581 to 591 (ANGQNQASPCS) are enriched in polar residues. 2 stretches are compositionally biased toward pro residues: residues 606–631 (SPPP…PPPY) and 638–670 (GYPP…PPPH). The span at 859–869 (QAKEEDKEKMK) shows a compositional bias: basic and acidic residues. Serine 930 carries the post-translational modification Phosphoserine. Composition is skewed to acidic residues over residues 991-1009 (KDED…EEAV) and 1018-1027 (ASDGEDEDSD). A compositionally biased stretch (low complexity) spans 1028–1071 (SSSQCSLYADSDGENGSTSDSESGSSSSSSSSSSSSSSSSSSES). The residue at position 1110 (serine 1110) is a Phosphoserine. Residues 1130–1150 (EEPPPSVPQPPAEPPAGPPDA) are compositionally biased toward pro residues. Over residues 1283-1292 (DDSEATETSD) the composition is skewed to acidic residues. The HCFC1-binding motif (HBM) signature appears at 1307–1311 (EHNYA). Disordered stretches follow at residues 1355–1427 (EEPK…FEPR) and 1480–1508 (TNLS…SEGY). The span at 1369 to 1383 (EGEEEEEDEEEESES) shows a compositional bias: acidic residues. Residues 1399-1412 (RRRSLRSHTRRRRP) show a composition bias toward basic residues. Over residues 1413-1424 (PLPPPPPPPPSF) the composition is skewed to pro residues. Residues 1424-1459 (FEPRSEFEQMTILYDIWNSGLDLEDMSYLRLTYERL) form an interaction with CFP1 region. Residues 1459–1546 (LLQQTSGADW…GTNRVLSERR (88 aa)) form an interaction with ASH2L, RBBP5 and WDR5 region. Residues 1501-1506 (GSARSE) carry the WDR5 interaction motif (WIN) motif. A RxxxRR motif motif is present at residues 1546 to 1551 (RSEQRR). The SET domain occupies 1577–1694 (KKLRFGRSRI…VDEEITYDYK (118 aa)). Position 1693 (tyrosine 1693) interacts with S-adenosyl-L-methionine. The 17-residue stretch at 1700–1716 (NKIPCLCGTESCRGSLN) folds into the Post-SET domain.

The protein belongs to the class V-like SAM-binding methyltransferase superfamily. Component of the SET1A/COMPASS complex composed of the catalytic subunit SETD1A, WDR5, WDR82, RBBP5, ASH2L/ASH2, CXXC1/CFP1, HCFC1 and DPY30 homotrimer. Forms a core complex with the evolutionary conserved subcomplex WRAD composed of WDR5, RBBP5, ASH2L/ASH2 and DPY30 subunits; WRAD differentially stimulates the methyltransferase activity. Interacts with BOD1L1 (via COMPASS-Shg1 domain) at replication forks. Interacts with HCFC1. Interacts with ASH2/ASH2L. Interacts with CXXC1/CFP1. Interacts with RBBP5. Interacts (via N-terminal region) with WDR82; the interaction is direct. Interacts (via the RRM domain) with hyperphosphorylated C-terminal domain (CTD) of RNA polymerase II large subunit (POLR2A) only in the presence of WDR82. Binds specifically to CTD heptad repeats phosphorylated on 'Ser-5' of each heptad. Interacts with ZNF335. Interacts with SUPT6H. Interacts with NAP1L1. Interacts (via WIN motif) with WDR5.

The protein resides in the nucleus. It localises to the nucleus speckle. The protein localises to the chromosome. It is found in the cytoplasm. The catalysed reaction is L-lysyl(4)-[histone H3] + S-adenosyl-L-methionine = N(6)-methyl-L-lysyl(4)-[histone H3] + S-adenosyl-L-homocysteine + H(+). The enzyme catalyses N(6)-methyl-L-lysyl(4)-[histone H3] + S-adenosyl-L-methionine = N(6),N(6)-dimethyl-L-lysyl(4)-[histone H3] + S-adenosyl-L-homocysteine + H(+). It carries out the reaction N(6),N(6)-dimethyl-L-lysyl(4)-[histone H3] + S-adenosyl-L-methionine = N(6),N(6),N(6)-trimethyl-L-lysyl(4)-[histone H3] + S-adenosyl-L-homocysteine + H(+). Its function is as follows. Histone methyltransferase that catalyzes methyl group transfer from S-adenosyl-L-methionine to the epsilon-amino group of 'Lys-4' of histone H3 (H3K4) via a non-processive mechanism. Part of chromatin remodeling machinery, forms H3K4me1, H3K4me2 and H3K4me3 methylation marks at active chromatin sites where transcription and DNA repair take place. Responsible for H3K4me3 enriched promoters and transcriptional programming of inner mass stem cells and neuron progenitors during embryogenesis. Required for H3K4me1 mark at stalled replication forks. Mediates FANCD2-dependent nucleosome remodeling and RAD51 nucleofilaments stabilization at reversed forks, protecting them from nucleolytic degradation. Does not methylate 'Lys-4' of histone H3 if the neighboring 'Lys-9' residue is already methylated. Has RNA binding activity towards transcripts involved in RNA processing and the DNA damage response. The protein is Histone-lysine N-methyltransferase SETD1A (Setd1a) of Mus musculus (Mouse).